The chain runs to 647 residues: Threonine--tRNA ligase (647 aa).

A TGS domain is found at 1 to 61 (MIKITFPDGA…EEDGSIEIVT (61 aa)). Residues 240 to 538 (DHRKLGKELD…LIETYKGAFP (299 aa)) are catalytic. Zn(2+)-binding residues include cysteine 334, histidine 385, and histidine 515.

It belongs to the class-II aminoacyl-tRNA synthetase family. In terms of assembly, homodimer. The cofactor is Zn(2+).

It localises to the cytoplasm. It catalyses the reaction tRNA(Thr) + L-threonine + ATP = L-threonyl-tRNA(Thr) + AMP + diphosphate + H(+). In terms of biological role, catalyzes the attachment of threonine to tRNA(Thr) in a two-step reaction: L-threonine is first activated by ATP to form Thr-AMP and then transferred to the acceptor end of tRNA(Thr). Also edits incorrectly charged L-seryl-tRNA(Thr). The sequence is that of Threonine--tRNA ligase from Streptococcus pyogenes serotype M4 (strain MGAS10750).